The primary structure comprises 224 residues: Cytochrome c biogenesis ATP-binding export protein CcmA (224 aa).

The 220-residue stretch at 1–220 (MQNAEAAPAL…EYAHAEVVGA (220 aa)) folds into the ABC transporter domain. ATP is bound at residue 40–47 (GANGSGKT).

Belongs to the ABC transporter superfamily. CcmA exporter (TC 3.A.1.107) family. As to quaternary structure, the complex is composed of two ATP-binding proteins (CcmA) and two transmembrane proteins (CcmB).

The protein resides in the cell inner membrane. It catalyses the reaction heme b(in) + ATP + H2O = heme b(out) + ADP + phosphate + H(+). Functionally, part of the ABC transporter complex CcmAB involved in the biogenesis of c-type cytochromes; once thought to export heme, this seems not to be the case, but its exact role is uncertain. Responsible for energy coupling to the transport system. This Bordetella parapertussis (strain 12822 / ATCC BAA-587 / NCTC 13253) protein is Cytochrome c biogenesis ATP-binding export protein CcmA.